Consider the following 134-residue polypeptide: Major pollen allergen Lol p 11 (134 aa).

Cystine bridges form between C14–C85, C17–C127, and C38–C73. N24 carries an N-linked (GlcNAc...) asparagine glycan.

This sequence belongs to the Ole e I family.

It is found in the secreted. The sequence is that of Major pollen allergen Lol p 11 from Lolium perenne (Perennial ryegrass).